Consider the following 317-residue polypeptide: Transaldolase (317 aa).

Lys-132 (schiff-base intermediate with substrate) is an active-site residue.

This sequence belongs to the transaldolase family. Type 1 subfamily. Homodimer.

The protein resides in the cytoplasm. The catalysed reaction is D-sedoheptulose 7-phosphate + D-glyceraldehyde 3-phosphate = D-erythrose 4-phosphate + beta-D-fructose 6-phosphate. Its pathway is carbohydrate degradation; pentose phosphate pathway; D-glyceraldehyde 3-phosphate and beta-D-fructose 6-phosphate from D-ribose 5-phosphate and D-xylulose 5-phosphate (non-oxidative stage): step 2/3. Functionally, transaldolase is important for the balance of metabolites in the pentose-phosphate pathway. The polypeptide is Transaldolase (Shewanella frigidimarina (strain NCIMB 400)).